Reading from the N-terminus, the 154-residue chain is Myoglobin (154 aa).

In terms of domain architecture, Globin spans 2–148 (GLSDGEWQLV…FRNDIAAKYK (147 aa)). A Phosphoserine modification is found at serine 4. Histidine 65 provides a ligand contact to nitrite. Histidine 65 contributes to the O2 binding site. The residue at position 68 (threonine 68) is a Phosphothreonine. Histidine 94 is a binding site for heme b.

The protein belongs to the globin family. As to quaternary structure, monomeric.

Its subcellular location is the cytoplasm. The protein localises to the sarcoplasm. The catalysed reaction is Fe(III)-heme b-[protein] + nitric oxide + H2O = Fe(II)-heme b-[protein] + nitrite + 2 H(+). The enzyme catalyses H2O2 + AH2 = A + 2 H2O. Its function is as follows. Monomeric heme protein which primary function is to store oxygen and facilitate its diffusion within muscle tissues. Reversibly binds oxygen through a pentacoordinated heme iron and enables its timely and efficient release as needed during periods of heightened demand. Depending on the oxidative conditions of tissues and cells, and in addition to its ability to bind oxygen, it also has a nitrite reductase activity whereby it regulates the production of bioactive nitric oxide. Under stress conditions, like hypoxia and anoxia, it also protects cells against reactive oxygen species thanks to its pseudoperoxidase activity. The chain is Myoglobin (MB) from Otolemur crassicaudatus (Brown greater galago).